The sequence spans 150 residues: Lipoprotein signal peptidase (150 aa).

Helical transmembrane passes span 5 to 25 (LSLVIIVVGIVADQIFKNWIV), 59 to 79 (QQWFFLILTPIVLVVALWFLW), and 83 to 103 (AQNWYFIGLTLIIAGALGNFI). Catalysis depends on residues aspartate 113 and aspartate 129. A helical membrane pass occupies residues 124-144 (IFNIADILLSVGFVLLFIAIL).

The protein belongs to the peptidase A8 family.

The protein localises to the cell membrane. It carries out the reaction Release of signal peptides from bacterial membrane prolipoproteins. Hydrolyzes -Xaa-Yaa-Zaa-|-(S,diacylglyceryl)Cys-, in which Xaa is hydrophobic (preferably Leu), and Yaa (Ala or Ser) and Zaa (Gly or Ala) have small, neutral side chains.. The protein operates within protein modification; lipoprotein biosynthesis (signal peptide cleavage). Its function is as follows. This protein specifically catalyzes the removal of signal peptides from prolipoproteins. This is Lipoprotein signal peptidase from Lactococcus lactis subsp. lactis (strain IL1403) (Streptococcus lactis).